The following is a 333-amino-acid chain: Nucleoid-associated protein APJL_0454 (333 aa).

Belongs to the YejK family.

It is found in the cytoplasm. The protein localises to the nucleoid. The sequence is that of Nucleoid-associated protein APJL_0454 from Actinobacillus pleuropneumoniae serotype 3 (strain JL03).